Consider the following 153-residue polypeptide: Cytochrome c-554 (153 aa).

The signal sequence occupies residues 1-20; that stretch reads MRPIPALALTFSLVAMPALA. Q21 is subject to Pyrrolidone carboxylic acid. The heme c site is built by M37, C142, C145, and H146.

In terms of processing, binds 1 heme c group covalently per subunit.

It is found in the periplasm. In terms of biological role, monoheme c-type cytochrome, that is particularly expressed when cells generate energy via aerobic respiration. The protein is Cytochrome c-554 (cycF) of Cereibacter sphaeroides (strain ATCC 17023 / DSM 158 / JCM 6121 / CCUG 31486 / LMG 2827 / NBRC 12203 / NCIMB 8253 / ATH 2.4.1.) (Rhodobacter sphaeroides).